The chain runs to 221 residues: MNRLIIVCLVAAMIYSTIALPMKEDISNDERPISVNEEPVKKNAAVAGAVIQGATLTFQVLDRILTVLGDISRKIAIGVDNESGRKWTAKNAYFFSGTSDVVLPYSVPNGKAFLYDGKKTRGPVATGAVGVLAYSMSDGNTLGILFSVPYDYNWYENWWNIKVYSGSKRANKWMYENLYYNASPHKGDNGWHEKSLGYGLKSRGYMASSGQTKLEIRVTRA.

A signal peptide spans 1 to 19; the sequence is MNRLIIVCLVAAMIYSTIA. A propeptide spanning residues 20–42 is cleaved from the precursor; it reads LPMKEDISNDERPISVNEEPVKK. Serine 96, valine 129, serine 147, proline 149, tyrosine 175, tyrosine 179, and tyrosine 180 together coordinate phosphocholine. Positions 147 to 162 are trp-rich region, which is important for the binding to lipid membrane; the sequence is SVPYDYNWYENWWNIK. Positions 186-188 match the Cell attachment site, crucial for protein stability motif; that stretch reads KGD.

It belongs to the actinoporin family. Sea anemone subfamily. Octamer or nonamer in membranes. Monomer in the soluble state. Expressed in actinopharynx and in gastric filaments. Is not expressed in tentacles.

Its subcellular location is the secreted. It localises to the nematocyst. It is found in the target cell membrane. May be involved in digestion of prey. Pore-forming protein that forms cations-selective hydrophilic pores of around 1 nm and causes cytolysis. Pore formation is a multi-step process that involves specific recognition of membrane sphingomyelin (but neither cholesterol nor phosphatidylcholine) using aromatic rich region and adjacent phosphocholine (POC) binding site, firm binding to the membrane (mainly driven by hydrophobic interactions) accompanied by the transfer of the N-terminal region to the lipid-water interface and finally pore formation after oligomerization of monomers. Shows hemolytic activity on equine erythrocytes. Hemolysis is highly inhibited in presence of sphingomyelin, suggesting that this protein targets sphingomyelin. This Cribrinopsis japonica (Deep-sea anemone) protein is Deep sea actinoporin Cjtox II.